The primary structure comprises 207 residues: Dephospho-CoA kinase (207 aa).

Residues 10–207 enclose the DPCK domain; the sequence is ILGLTGGIGS…FYLTLRGGQS (198 aa). Residue 18-23 coordinates ATP; sequence GSGKSA.

The protein belongs to the CoaE family.

The protein localises to the cytoplasm. It carries out the reaction 3'-dephospho-CoA + ATP = ADP + CoA + H(+). The protein operates within cofactor biosynthesis; coenzyme A biosynthesis; CoA from (R)-pantothenate: step 5/5. In terms of biological role, catalyzes the phosphorylation of the 3'-hydroxyl group of dephosphocoenzyme A to form coenzyme A. This chain is Dephospho-CoA kinase, found in Pseudomonas savastanoi pv. phaseolicola (strain 1448A / Race 6) (Pseudomonas syringae pv. phaseolicola (strain 1448A / Race 6)).